Reading from the N-terminus, the 318-residue chain is MFMVNLLMLVIPVMLAMAFLTLLERKTLGYMQFRKGPNVVGPNGLLQPFADAMKLFIKEPLQPLTSSTSLYIIAPTLALSIALIMWTPLPIPYPLVNINLGVLFILATSSLAVYSILWSGWASNSKYALIGALRAVAQTISYEVTLAIILLCILLMSGSFTLSTLIKTQEHTWLLLPSWPLAMMWFISTLAETNRAPFDLTEGESELVSGFNVEYAAGPFALFFMAEYTNIIMMNALTATIFMSAIHSMNFPEFFSINFTLKTLLLTTIFLWVRASYPRFRYDQLMHLLWKNFLPLTLAMCMWHTALPIFLANIPPQT.

8 helical membrane-spanning segments follow: residues 2–22 (FMVN…FLTL), 71–91 (YIIA…PLPI), 98–118 (INLG…SILW), 146–166 (LAII…STLI), 171–191 (HTWL…STLA), 222–242 (LFFM…ATIF), 253–273 (EFFS…FLWV), and 294–314 (LPLT…LANI).

Belongs to the complex I subunit 1 family.

It localises to the mitochondrion inner membrane. It catalyses the reaction a ubiquinone + NADH + 5 H(+)(in) = a ubiquinol + NAD(+) + 4 H(+)(out). Core subunit of the mitochondrial membrane respiratory chain NADH dehydrogenase (Complex I) that is believed to belong to the minimal assembly required for catalysis. Complex I functions in the transfer of electrons from NADH to the respiratory chain. The immediate electron acceptor for the enzyme is believed to be ubiquinone. This chain is NADH-ubiquinone oxidoreductase chain 1 (MT-ND1), found in Nycticebus coucang (Slow loris).